The sequence spans 180 residues: Isopentenyl-diphosphate Delta-isomerase (180 aa).

2 residues coordinate Mn(2+): His-22 and His-28. The region spanning Leu-26–Ile-160 is the Nudix hydrolase domain. Residue Cys-62 is part of the active site. Position 62 (Cys-62) interacts with Mg(2+). Position 64 (His-64) interacts with Mn(2+). A Mg(2+)-binding site is contributed by Glu-82. Positions 108 and 110 each coordinate Mn(2+). Residue Glu-110 is part of the active site.

Belongs to the IPP isomerase type 1 family. The cofactor is Mg(2+). Mn(2+) serves as cofactor.

It is found in the cytoplasm. The catalysed reaction is isopentenyl diphosphate = dimethylallyl diphosphate. It participates in isoprenoid biosynthesis; dimethylallyl diphosphate biosynthesis; dimethylallyl diphosphate from isopentenyl diphosphate: step 1/1. Catalyzes the 1,3-allylic rearrangement of the homoallylic substrate isopentenyl (IPP) to its highly electrophilic allylic isomer, dimethylallyl diphosphate (DMAPP). The protein is Isopentenyl-diphosphate Delta-isomerase of Ruegeria pomeroyi (strain ATCC 700808 / DSM 15171 / DSS-3) (Silicibacter pomeroyi).